The following is a 527-amino-acid chain: TnpB-like protein R854 (527 aa).

The span at 21–36 shows a compositional bias: basic residues; that stretch reads GSKTKKKVFVKKKPPA. Residues 21-50 are disordered; sequence GSKTKKKVFVKKKPPAKKPPDKKPLKKTTK. Zn(2+)-binding residues include cysteine 481, cysteine 484, cysteine 498, and cysteine 501.

This sequence in the central section; belongs to the transposase 2 family. It in the C-terminal section; belongs to the transposase 35 family.

The sequence is that of TnpB-like protein R854 from Acanthamoeba polyphaga mimivirus (APMV).